The following is a 286-amino-acid chain: P2R1A-PPP2R2A-interacting phosphatase regulator 1 (286 aa).

Positions 1–46 (MAQEKMELDLELPAGTGASPAEGGGPGSGGLRRSNSAPLIHGLSDS) are disordered. A Phosphoserine modification is found at Ser-34. Residue Ser-36 is modified to Phosphoserine; by CHEK1. Residues Ser-44, Ser-47, Ser-61, and Ser-75 each carry the phosphoserine modification. Lys-88 is covalently cross-linked (Glycyl lysine isopeptide (Lys-Gly) (interchain with G-Cter in SUMO1)). Phosphoserine is present on residues Ser-142 and Ser-146. Thr-148 carries the phosphothreonine modification. Residues 166-187 (SNGLPPSPIPSPTTRFTTRRSQ) are disordered. Residues 177 to 187 (PTTRFTTRRSQ) show a composition bias toward low complexity. Residues Ser-186 and Ser-188 each carry the phosphoserine modification. Residues 238–286 (VSSDTLDGNSSSAGSSCNSPAKVSTTTDSPVSPAQAASPFIPVDELSSK) form a disordered region. Residues 245–256 (GNSSSAGSSCNS) are compositionally biased toward low complexity. Residues 258–269 (AKVSTTTDSPVS) are compositionally biased toward polar residues. 3 positions are modified to phosphoserine: Ser-266, Ser-269, and Ser-275.

It belongs to the FAM122 family. As to quaternary structure, interacts with PPP2CA and PPP2R1A. Interacts (via its N-terminus) with PPP2R2A; the interaction is direct and this interaction inhibits PP2A activity. The CHEK1-mediated Ser-36 phosphorylated form interacts with 14-3-3 proteins. In terms of processing, CHEK1-mediated phosphorylation at Ser-36 negatively regulates its ability to inhibit serine/threonine-protein phosphatase 2A (PP2A) activity. Phosphorylation leads to its release from the PP2A complex and its sequestration by 14-3-3 proteins in the cytoplasm resulting in its inability to translocate to the nucleus, where it otherwise inhibits PP2A.

It is found in the nucleus. The protein resides in the cytoplasm. Functionally, acts as an inhibitor of serine/threonine-protein phosphatase 2A (PP2A) activity. Inhibits PP2A activity by blocking the substrate binding site on PPP2R2A and the active site of PPP2CA. Potentiates ubiquitin-mediated proteasomal degradation of serine/threonine-protein phosphatase 2A catalytic subunit alpha (PPP2CA). Inhibits PP2A-mediated dephosphorylation of WEE1, promoting ubiquitin-mediated proteolysis of WEE1, thereby releasing G2/M checkpoint. The chain is P2R1A-PPP2R2A-interacting phosphatase regulator 1 from Rattus norvegicus (Rat).